The following is a 500-amino-acid chain: NAD(P)H-quinone oxidoreductase chain 4, chloroplastic (500 aa).

14 consecutive transmembrane segments (helical) span residues 4 to 24, 31 to 51, 87 to 107, 113 to 130, 134 to 154, 167 to 187, 208 to 228, 242 to 262, 272 to 292, 305 to 325, 330 to 350, 386 to 406, 416 to 436, and 462 to 482; these read FPWL…LFFL, LIKW…TYAF, IGPI…AWPV, LFHF…GSFS, LLLF…LLSM, FILY…GLGL, ALEI…SPII, HYST…YGLV, AHSI…IYAA, IAYS…SITD, GAIL…FLAG, LALP…GIIT, ILIT…SLSM, and LFVS…PDFV.

Belongs to the complex I subunit 4 family.

The protein localises to the plastid. It localises to the chloroplast thylakoid membrane. It carries out the reaction a plastoquinone + NADH + (n+1) H(+)(in) = a plastoquinol + NAD(+) + n H(+)(out). The enzyme catalyses a plastoquinone + NADPH + (n+1) H(+)(in) = a plastoquinol + NADP(+) + n H(+)(out). The polypeptide is NAD(P)H-quinone oxidoreductase chain 4, chloroplastic (Gossypium barbadense (Sea Island cotton)).